The primary structure comprises 214 residues: Pyridoxine/pyridoxamine 5'-phosphate oxidase (214 aa).

Substrate contacts are provided by residues R8–Y11 and K66. Residues R61–K66, F76–T77, R82, K83, and Q105 contribute to the FMN site. Positions 123, 127, and 131 each coordinate substrate. FMN-binding positions include Q140–S141 and W184. Residue R190 to H192 coordinates substrate. An FMN-binding site is contributed by R194.

Belongs to the pyridoxamine 5'-phosphate oxidase family. Homodimer. The cofactor is FMN.

It catalyses the reaction pyridoxamine 5'-phosphate + O2 + H2O = pyridoxal 5'-phosphate + H2O2 + NH4(+). The enzyme catalyses pyridoxine 5'-phosphate + O2 = pyridoxal 5'-phosphate + H2O2. It functions in the pathway cofactor metabolism; pyridoxal 5'-phosphate salvage; pyridoxal 5'-phosphate from pyridoxamine 5'-phosphate: step 1/1. The protein operates within cofactor metabolism; pyridoxal 5'-phosphate salvage; pyridoxal 5'-phosphate from pyridoxine 5'-phosphate: step 1/1. Functionally, catalyzes the oxidation of either pyridoxine 5'-phosphate (PNP) or pyridoxamine 5'-phosphate (PMP) into pyridoxal 5'-phosphate (PLP). This chain is Pyridoxine/pyridoxamine 5'-phosphate oxidase, found in Burkholderia cenocepacia (strain HI2424).